A 287-amino-acid polypeptide reads, in one-letter code: ATP synthase gamma chain (287 aa).

The protein belongs to the ATPase gamma chain family. In terms of assembly, F-type ATPases have 2 components, CF(1) - the catalytic core - and CF(0) - the membrane proton channel. CF(1) has five subunits: alpha(3), beta(3), gamma(1), delta(1), epsilon(1). CF(0) has three main subunits: a, b and c.

The protein localises to the cell inner membrane. In terms of biological role, produces ATP from ADP in the presence of a proton gradient across the membrane. The gamma chain is believed to be important in regulating ATPase activity and the flow of protons through the CF(0) complex. The protein is ATP synthase gamma chain of Alkalilimnicola ehrlichii (strain ATCC BAA-1101 / DSM 17681 / MLHE-1).